Consider the following 514-residue polypeptide: 2,3-bisphosphoglycerate-independent phosphoglycerate mutase (514 aa).

Positions 14 and 64 each coordinate Mn(2+). S64 functions as the Phosphoserine intermediate in the catalytic mechanism. Residues H125, 155–156 (RD), R187, R193, 263–266 (RADR), and K337 each bind substrate. 5 residues coordinate Mn(2+): D404, H408, D445, H446, and H463.

Belongs to the BPG-independent phosphoglycerate mutase family. In terms of assembly, monomer. It depends on Mn(2+) as a cofactor.

The enzyme catalyses (2R)-2-phosphoglycerate = (2R)-3-phosphoglycerate. The protein operates within carbohydrate degradation; glycolysis; pyruvate from D-glyceraldehyde 3-phosphate: step 3/5. In terms of biological role, catalyzes the interconversion of 2-phosphoglycerate and 3-phosphoglycerate. This is 2,3-bisphosphoglycerate-independent phosphoglycerate mutase from Hahella chejuensis (strain KCTC 2396).